Reading from the N-terminus, the 91-residue chain is Large ribosomal subunit protein eL37 (91 aa).

Residues cysteine 19, cysteine 22, cysteine 34, and cysteine 37 each coordinate Zn(2+). A C4-type zinc finger spans residues 19-37 (CRRCGKSSFHIQKKTCASC).

It belongs to the eukaryotic ribosomal protein eL37 family. It depends on Zn(2+) as a cofactor.

Binds to the 23S rRNA. This is Large ribosomal subunit protein eL37 (rpl37) from Dictyostelium discoideum (Social amoeba).